The primary structure comprises 464 residues: ATP synthase subunit beta (464 aa).

Position 153-160 (153-160 (GGAGVGKT)) interacts with ATP.

This sequence belongs to the ATPase alpha/beta chains family. F-type ATPases have 2 components, CF(1) - the catalytic core - and CF(0) - the membrane proton channel. CF(1) has five subunits: alpha(3), beta(3), gamma(1), delta(1), epsilon(1). CF(0) has three main subunits: a(1), b(2) and c(9-12). The alpha and beta chains form an alternating ring which encloses part of the gamma chain. CF(1) is attached to CF(0) by a central stalk formed by the gamma and epsilon chains, while a peripheral stalk is formed by the delta and b chains.

The protein resides in the cell inner membrane. It catalyses the reaction ATP + H2O + 4 H(+)(in) = ADP + phosphate + 5 H(+)(out). Produces ATP from ADP in the presence of a proton gradient across the membrane. The catalytic sites are hosted primarily by the beta subunits. The sequence is that of ATP synthase subunit beta from Burkholderia orbicola (strain MC0-3).